A 229-amino-acid chain; its full sequence is MFRESDNTIAPSNQDLNKPVVDKEQPAERTPFFVDKNAPHNEVDFARIESAVREILEAVGEDPDRDGLLETPERVARMYAEMFAGLKSDPGRHLAKVFAEDYDEIVLVRDISFCSMCEHHLLPFTGKAHIAYLPSGKVVGLSKLARVVEEVARRPQVQERLTHTVANLIEDRLSARGVAVVVESTHSCMTMRGIRKPGSLCLTSAMRGAFKTDPKSRAEVLGLINRAAS.

The tract at residues 1-31 (MFRESDNTIAPSNQDLNKPVVDKEQPAERTP) is disordered. The span at 7–16 (NTIAPSNQDL) shows a compositional bias: polar residues. Residues C117, H120, and C188 each contribute to the Zn(2+) site.

This sequence belongs to the GTP cyclohydrolase I family. Toroid-shaped homodecamer, composed of two pentamers of five dimers.

It carries out the reaction GTP + H2O = 7,8-dihydroneopterin 3'-triphosphate + formate + H(+). It participates in cofactor biosynthesis; 7,8-dihydroneopterin triphosphate biosynthesis; 7,8-dihydroneopterin triphosphate from GTP: step 1/1. In Rhodopirellula baltica (strain DSM 10527 / NCIMB 13988 / SH1), this protein is GTP cyclohydrolase 1.